The chain runs to 561 residues: MNINVADLLNGNYILLLFVVLALGLCLGKLRLGSVQLGNSIGVLVVSLLLGQQHFSINTDALNLGFMLFIFCVGVEAGPNFFSIFFRDGKNYLMLALVMVGSALLIALGLGKLFGWDIGLTVGMLAGSMTSTPVLVGAGDTLRHSGIASTQLSSALDNLSLGYALTYLIGLVSLIVGARYLPKLQHQDLQTSAQQIARERGLDTDANRKVYLPVIRAYRVGPELVAWTDGKNLRELGIYRQTGCYIERIRRNGILANPDGDAVLQMGDEIALVGYPDAHARLDPSFRNGKEVFDRDLLDMRIVTEEIVVKNHNAVGRRLAQLKLTDHGCFLNRVIRSQIEMPIDDNVVLNKGDVLQVSGDARRVKTIADRIGFISIHSQVTDLLAFCAFFIIGLMIGMITFQFSNFSFGIGNAAGLLFAGIMLGFLRANHPTFGYIPQGALNMVKEFGLMVFMAGVGLSAGSGISNGLGAVGGQMLIAGLVVSLVPVVICFLFGAYVLRMNRALLFGAMMGARTCAPAMEIISDTARSNIPALGYAGTYAIANVLLTLAGTLIVIIWPGLG.

5 consecutive transmembrane segments (helical) span residues 8-28, 32-52, 66-86, 94-114, and 158-178; these read LLNG…LCLG, LGSV…LLGQ, FMLF…SIFF, MLAL…GKLF, and NLSL…IVGA. RCK C-terminal domains follow at residues 200–288 and 292–373; these read RGLD…SFRN and VFDR…RIGF. A run of 5 helical transmembrane segments spans residues 383-403, 406-426, 447-467, 475-495, and 540-560; these read LLAF…TFQF, FSFG…LGFL, FGLM…ISNG, MLIA…LFGA, and AIAN…WPGL.

It belongs to the AAE transporter (TC 2.A.81) family. YbjL subfamily.

The protein localises to the cell membrane. In Salmonella dublin (strain CT_02021853), this protein is Putative transport protein YbjL.